The sequence spans 1210 residues: Inner capsid protein VP3 (1210 aa).

The interval 1 to 28 is disordered; it reads MPRTSRNVRATEVATTAIPPSNAATDTT. The C2H2-type zinc finger occupies 113-136; sequence LRCQQCGAKFSSMTQLAEHVRTEH. Positions 294–319 are disordered; the sequence is PHAGPQVRSVQSQDQQVYSVDSGPDP. Residues 299 to 315 show a composition bias toward low complexity; it reads QVRSVQSQDQQVYSVDS.

This sequence belongs to the turreted BTV-fold inner capsid family. Homodecamer; each decamer is made up of two conformers of VP2, called VP2A and VP2B. 12 homodecamers assemble to form an icosahedral capsid. Interacts with VP6.

Its subcellular location is the virion. In terms of biological role, inner capsid protein that self-assembles to form an icosahedral capsid with a T=2 symmetry, which consists of 120 copies of VP2, with channels at each of its five-fold vertices. This capsid constitutes the innermost concentric layer of the viral mature particle. The protein is Inner capsid protein VP3 (S3) of Aquareovirus A (isolate Chum salmon/Japan/CSRV/1981) (AQRV-A).